A 236-amino-acid chain; its full sequence is Flagellar L-ring protein (236 aa).

An N-terminal signal peptide occupies residues 1–24 (MKNKNRLNTIKLLSISLLIAVTTA). Cysteine 25 carries N-palmitoyl cysteine lipidation. A lipid anchor (S-diacylglycerol cysteine) is attached at cysteine 25.

It belongs to the FlgH family. The basal body constitutes a major portion of the flagellar organelle and consists of four rings (L,P,S, and M) mounted on a central rod.

Its subcellular location is the cell outer membrane. It localises to the bacterial flagellum basal body. Assembles around the rod to form the L-ring and probably protects the motor/basal body from shearing forces during rotation. In Colwellia psychrerythraea (strain 34H / ATCC BAA-681) (Vibrio psychroerythus), this protein is Flagellar L-ring protein.